Here is a 501-residue protein sequence, read N- to C-terminus: Aromatase 3 (501 aa).

Position 435 (Cys435) interacts with heme.

The protein belongs to the cytochrome P450 family. Heme is required as a cofactor. Ovary.

The protein resides in the membrane. The catalysed reaction is testosterone + 3 reduced [NADPH--hemoprotein reductase] + 3 O2 = 17beta-estradiol + formate + 3 oxidized [NADPH--hemoprotein reductase] + 4 H2O + 4 H(+). The enzyme catalyses androst-4-ene-3,17-dione + 3 reduced [NADPH--hemoprotein reductase] + 3 O2 = estrone + formate + 3 oxidized [NADPH--hemoprotein reductase] + 4 H2O + 4 H(+). Its function is as follows. Catalyzes the formation of aromatic C18 estrogens from C19 androgens. The chain is Aromatase 3 (CYP19A3) from Sus scrofa (Pig).